Here is a 185-residue protein sequence, read N- to C-terminus: Small ribosomal subunit protein bS16 (185 aa).

Residues Q83–G185 form a disordered region. Over residues N89–K125 the composition is skewed to basic and acidic residues. Low complexity-rich tracts occupy residues A126 to P146 and V159 to A176.

It belongs to the bacterial ribosomal protein bS16 family.

The chain is Small ribosomal subunit protein bS16 from Caulobacter sp. (strain K31).